The chain runs to 109 residues: UPF0060 membrane protein ABO_1373 (109 aa).

The next 4 membrane-spanning stretches (helical) occupy residues 1–21 (MLAL…IVGC), 33–53 (PGWV…LLSL), 63–83 (AAYG…VEGV), and 87–107 (PWDF…MFAP).

It belongs to the UPF0060 family.

It localises to the cell inner membrane. The polypeptide is UPF0060 membrane protein ABO_1373 (Alcanivorax borkumensis (strain ATCC 700651 / DSM 11573 / NCIMB 13689 / SK2)).